Consider the following 279-residue polypeptide: Putative pyruvate, phosphate dikinase regulatory protein (279 aa).

153–160 (GVSRTSKT) contributes to the ADP binding site.

The protein belongs to the pyruvate, phosphate/water dikinase regulatory protein family. PDRP subfamily.

It carries out the reaction N(tele)-phospho-L-histidyl/L-threonyl-[pyruvate, phosphate dikinase] + ADP = N(tele)-phospho-L-histidyl/O-phospho-L-threonyl-[pyruvate, phosphate dikinase] + AMP + H(+). It catalyses the reaction N(tele)-phospho-L-histidyl/O-phospho-L-threonyl-[pyruvate, phosphate dikinase] + phosphate + H(+) = N(tele)-phospho-L-histidyl/L-threonyl-[pyruvate, phosphate dikinase] + diphosphate. Bifunctional serine/threonine kinase and phosphorylase involved in the regulation of the pyruvate, phosphate dikinase (PPDK) by catalyzing its phosphorylation/dephosphorylation. This Rhodopseudomonas palustris (strain ATCC BAA-98 / CGA009) protein is Putative pyruvate, phosphate dikinase regulatory protein.